Consider the following 276-residue polypeptide: Myoblast determination protein 1 homolog 1 (276 aa).

The 52-residue stretch at 84–135 (DRRKAATMRERRRLSKVNDAFETLKRCTSTNPNQRLPKVDILRNAISYIESL) folds into the bHLH domain. A disordered region spans residues 228–253 (CPAVQDGSEGSSPCSPGDGSIASENG).

In terms of assembly, efficient DNA binding requires dimerization with another bHLH protein.

It is found in the nucleus. In terms of biological role, may act as a transcriptional activator that promotes transcription of muscle-specific target genes and plays a role in muscle differentiation. In Oncorhynchus mykiss (Rainbow trout), this protein is Myoblast determination protein 1 homolog 1 (myod1).